Here is a 195-residue protein sequence, read N- to C-terminus: Cell division protein SepF (195 aa).

Positions 32 to 54 are disordered; it reads RYSKTNSSETLAPEEEEPIRNRR.

Belongs to the SepF family. In terms of assembly, homodimer. Interacts with FtsZ.

It localises to the cytoplasm. Functionally, cell division protein that is part of the divisome complex and is recruited early to the Z-ring. Probably stimulates Z-ring formation, perhaps through the cross-linking of FtsZ protofilaments. Its function overlaps with FtsA. This is Cell division protein SepF from Gloeothece citriformis (strain PCC 7424) (Cyanothece sp. (strain PCC 7424)).